A 361-amino-acid chain; its full sequence is Probable dual-specificity RNA methyltransferase RlmN (361 aa).

The active-site Proton acceptor is the glutamate 91. Positions 97–329 constitute a Radical SAM core domain; that stretch reads QHYGLSVCVT…KKKGGNCVVR (233 aa). An intrachain disulfide couples cysteine 104 to cysteine 340. The [4Fe-4S] cluster site is built by cysteine 111, cysteine 115, and cysteine 118. S-adenosyl-L-methionine is bound by residues 163 to 164, serine 195, 218 to 220, and asparagine 296; these read GE and SLH. The active-site S-methylcysteine intermediate is cysteine 340.

This sequence belongs to the radical SAM superfamily. RlmN family. Requires [4Fe-4S] cluster as cofactor.

The protein localises to the cytoplasm. It carries out the reaction adenosine(2503) in 23S rRNA + 2 reduced [2Fe-2S]-[ferredoxin] + 2 S-adenosyl-L-methionine = 2-methyladenosine(2503) in 23S rRNA + 5'-deoxyadenosine + L-methionine + 2 oxidized [2Fe-2S]-[ferredoxin] + S-adenosyl-L-homocysteine. The enzyme catalyses adenosine(37) in tRNA + 2 reduced [2Fe-2S]-[ferredoxin] + 2 S-adenosyl-L-methionine = 2-methyladenosine(37) in tRNA + 5'-deoxyadenosine + L-methionine + 2 oxidized [2Fe-2S]-[ferredoxin] + S-adenosyl-L-homocysteine. Specifically methylates position 2 of adenine 2503 in 23S rRNA and position 2 of adenine 37 in tRNAs. The protein is Probable dual-specificity RNA methyltransferase RlmN of Streptococcus pneumoniae (strain Hungary19A-6).